The following is a 210-amino-acid chain: Probable nicotinate-nucleotide adenylyltransferase (210 aa).

Belongs to the NadD family.

The enzyme catalyses nicotinate beta-D-ribonucleotide + ATP + H(+) = deamido-NAD(+) + diphosphate. The protein operates within cofactor biosynthesis; NAD(+) biosynthesis; deamido-NAD(+) from nicotinate D-ribonucleotide: step 1/1. Its function is as follows. Catalyzes the reversible adenylation of nicotinate mononucleotide (NaMN) to nicotinic acid adenine dinucleotide (NaAD). The protein is Probable nicotinate-nucleotide adenylyltransferase of Methylococcus capsulatus (strain ATCC 33009 / NCIMB 11132 / Bath).